The following is a 500-amino-acid chain: L-arabinose isomerase (500 aa).

4 residues coordinate Mn(2+): glutamate 306, glutamate 333, histidine 350, and histidine 450.

This sequence belongs to the arabinose isomerase family. As to quaternary structure, homohexamer. The cofactor is Mn(2+).

It carries out the reaction beta-L-arabinopyranose = L-ribulose. It participates in carbohydrate degradation; L-arabinose degradation via L-ribulose; D-xylulose 5-phosphate from L-arabinose (bacterial route): step 1/3. Catalyzes the conversion of L-arabinose to L-ribulose. In Escherichia coli O6:H1 (strain CFT073 / ATCC 700928 / UPEC), this protein is L-arabinose isomerase.